The primary structure comprises 410 residues: Provicilin (410 aa).

The N-terminal stretch at 1–15 is a signal peptide; that stretch reads MLLAIAFLASVCVSS. Residues 23-181 form the Cupin type-1 1 domain; it reads FIFKSNRFQT…AFNTNYEEIE (159 aa). Disordered stretches follow at residues 223-242 and 312-331; these read SKNAKSSSKKSVSSESGPFN and QRNENQGKENDKEEEQEEET. A compositionally biased stretch (low complexity) spans 225–238; it reads NAKSSSKKSVSSES. Residues 241–409 form the Cupin type-1 2 domain; it reads FNLRSRNPIY…AFPGSSHEVD (169 aa). Asparagine 359 carries N-linked (GlcNAc...) asparagine glycosylation.

It belongs to the 7S seed storage protein family.

The protein resides in the vacuole. It is found in the aleurone grain. In terms of biological role, seed storage protein. This is Provicilin from Pisum sativum (Garden pea).